Here is a 52-residue protein sequence, read N- to C-terminus: UPF0391 membrane protein XCV0245 (52 aa).

A run of 2 helical transmembrane segments spans residues 5-25 (AIIF…GIAG) and 27-47 (ATNI…ISMF).

The protein belongs to the UPF0391 family.

The protein resides in the cell membrane. This Xanthomonas euvesicatoria pv. vesicatoria (strain 85-10) (Xanthomonas campestris pv. vesicatoria) protein is UPF0391 membrane protein XCV0245.